A 273-amino-acid polypeptide reads, in one-letter code: Dermonecrotic toxin LhSicTox-alphaIA2bi (273 aa).

2 residues coordinate Mg(2+): glutamate 25 and aspartate 27. Histidine 41 (nucleophile) is an active-site residue. 2 disulfide bridges follow: cysteine 45/cysteine 51 and cysteine 47/cysteine 190. Aspartate 85 lines the Mg(2+) pocket.

This sequence belongs to the arthropod phospholipase D family. Class II subfamily. Requires Mg(2+) as cofactor. As to expression, expressed by the venom gland.

It is found in the secreted. The enzyme catalyses an N-(acyl)-sphingosylphosphocholine = an N-(acyl)-sphingosyl-1,3-cyclic phosphate + choline. It carries out the reaction an N-(acyl)-sphingosylphosphoethanolamine = an N-(acyl)-sphingosyl-1,3-cyclic phosphate + ethanolamine. The catalysed reaction is a 1-acyl-sn-glycero-3-phosphocholine = a 1-acyl-sn-glycero-2,3-cyclic phosphate + choline. It catalyses the reaction a 1-acyl-sn-glycero-3-phosphoethanolamine = a 1-acyl-sn-glycero-2,3-cyclic phosphate + ethanolamine. In terms of biological role, dermonecrotic toxins cleave the phosphodiester linkage between the phosphate and headgroup of certain phospholipids (sphingolipid and lysolipid substrates), forming an alcohol (often choline) and a cyclic phosphate. This toxin acts on sphingomyelin (SM). It may also act on ceramide phosphoethanolamine (CPE), lysophosphatidylcholine (LPC) and lysophosphatidylethanolamine (LPE), but not on lysophosphatidylserine (LPS), and lysophosphatidylglycerol (LPG). It acts by transphosphatidylation, releasing exclusively cyclic phosphate products as second products. Induces dermonecrosis, hemolysis, increased vascular permeability, edema, inflammatory response, and platelet aggregation. This chain is Dermonecrotic toxin LhSicTox-alphaIA2bi, found in Loxosceles hirsuta (Recluse spider).